Reading from the N-terminus, the 251-residue chain is Proteasome subunit alpha type-7 (251 aa).

It belongs to the peptidase T1A family. In terms of assembly, the 26S proteasome consists of a 20S proteasome core and two 19S regulatory subunits. The 20S proteasome core is composed of 28 subunits that are arranged in four stacked rings, resulting in a barrel-shaped structure. The two end rings are each formed by seven alpha subunits, and the two central rings are each formed by seven beta subunits. The catalytic chamber with the active sites is on the inside of the barrel.

The protein resides in the cytoplasm. It localises to the nucleus. Functionally, the proteasome is a multicatalytic proteinase complex which is characterized by its ability to cleave peptides with Arg, Phe, Tyr, Leu, and Glu adjacent to the leaving group at neutral or slightly basic pH. The proteasome has an ATP-dependent proteolytic activity. In Carassius auratus (Goldfish), this protein is Proteasome subunit alpha type-7 (psma7).